The primary structure comprises 253 residues: Maleate isomerase (253 aa).

Substrate contacts are provided by residues asparagine 14, 80–82, tyrosine 137, and asparagine 167; that span reads CLV. Cysteine 80 functions as the Nucleophile in the catalytic mechanism. Cysteine 80 carries the post-translational modification S-(2-succinyl)cysteine. The active-site Proton donor is cysteine 198. 199-200 contacts substrate; sequence VQ.

Belongs to the maleate isomerase family. As to quaternary structure, homodimer.

The enzyme catalyses maleate = fumarate. In terms of biological role, catalyzes cis-trans isomerization of the C2-C3 double bond in maleate to yield fumarate. The protein is Maleate isomerase of Alcaligenes faecalis.